A 602-amino-acid polypeptide reads, in one-letter code: ATP-dependent lipid A-core flippase (602 aa).

5 consecutive transmembrane segments (helical) span residues 28–48, 84–104, 158–178, 180–200, and 268–288; these read VGIF…QPML, LLII…NYFL, IKVV…LLWM, WHLT…VSIA, and PMLQ…VLFL. Positions 32–323 constitute an ABC transmembrane type-1 domain; sequence LLSIVGFVIF…LSEVSSTIQK (292 aa). One can recognise an ABC transporter domain in the interval 355–591; that stretch reads LEVRNLSFTY…NGHYARLHAM (237 aa). Position 389-396 (389-396) interacts with ATP; it reads GRSGSGKS.

This sequence belongs to the ABC transporter superfamily. Lipid exporter (TC 3.A.1.106) family. As to quaternary structure, homodimer.

It is found in the cell inner membrane. The enzyme catalyses ATP + H2O + lipid A-core oligosaccharideSide 1 = ADP + phosphate + lipid A-core oligosaccharideSide 2.. In terms of biological role, involved in lipopolysaccharide (LPS) biosynthesis. Translocates lipid A-core from the inner to the outer leaflet of the inner membrane. Transmembrane domains (TMD) form a pore in the inner membrane and the ATP-binding domain (NBD) is responsible for energy generation. The polypeptide is ATP-dependent lipid A-core flippase (Pseudomonas putida (strain ATCC 47054 / DSM 6125 / CFBP 8728 / NCIMB 11950 / KT2440)).